The following is a 262-amino-acid chain: Putative hydro-lyase BLi00500/BL02808 (262 aa).

Belongs to the D-glutamate cyclase family.

In Bacillus licheniformis (strain ATCC 14580 / DSM 13 / JCM 2505 / CCUG 7422 / NBRC 12200 / NCIMB 9375 / NCTC 10341 / NRRL NRS-1264 / Gibson 46), this protein is Putative hydro-lyase BLi00500/BL02808.